The following is a 1382-amino-acid chain: ABC-type transporter atr1 (1382 aa).

Positions 1 to 12 (MRFRSDSRADHQ) are enriched in basic and acidic residues. The disordered stretch occupies residues 1–56 (MRFRSDSRADHQHPKKQGSMDPDTIQALKYQDRSSSSSSNNKPKEKVGSASTSPSP). N62 carries N-linked (GlcNAc...) asparagine glycosylation. The next 6 membrane-spanning stretches (helical) occupy residues 101 to 121 (LFGT…NIFI), 159 to 179 (LILL…MAVF), 233 to 253 (LPMA…AFAF), 259 to 279 (LVLL…GALT), 339 to 359 (GVGV…AFFY), and 374 to 394 (IVSV…LFSM). The 300-residue stretch at 101–400 (LFGTGMAIAA…LFSMIENFTM (300 aa)) folds into the ABC transmembrane type-1 1 domain. N-linked (GlcNAc...) asparagine glycosylation is present at N397. One can recognise an ABC transporter 1 domain in the interval 445–688 (LKLDHVHFAY…PNGTFASMLR (244 aa)). ATP is bound at residue 480-487 (GLSGSGKS). The N-linked (GlcNAc...) asparagine glycan is linked to N680. Residues 738-768 (SVKPKDPSKNFEPPGESYASPAADGVKQDAP) are disordered. An ABC transmembrane type-1 2 domain is found at 797–1094 (LGSLCAAIIG…IFNYSADFSS (298 aa)). Residues 800–820 (LCAAIIGAVYPVYAILFGTAI) traverse the membrane as a helical segment. Residue N827 is glycosylated (N-linked (GlcNAc...) asparagine). The chain crosses the membrane as a helical span at residues 848-868 (ISSGSFFIVAVGCAFISFYHV). The N-linked (GlcNAc...) asparagine glycan is linked to N903. Helical transmembrane passes span 911 to 931 (SLSV…GSIV) and 951 to 973 (LALV…LRVL). Residue N1020 is glycosylated (N-linked (GlcNAc...) asparagine). Transmembrane regions (helical) follow at residues 1034–1054 (VLFG…FWYG) and 1067–1087 (GFFT…NIFN). In terms of domain architecture, ABC transporter 2 spans 1136–1377 (IALKEVTFRY…DGLFALMARL (242 aa)). ATP is bound at residue 1171–1178 (GGSGSGKS). N1324 carries an N-linked (GlcNAc...) asparagine glycan.

It belongs to the ABC transporter superfamily. ABCB family. Multidrug resistance exporter (TC 3.A.1.201) subfamily.

It localises to the cell membrane. ABC-type transporter; part of the gene cluster that mediates the biosynthesis of the glycolipid biosurfactant ustilagic acid (UA). UA is a secreted cellobiose glycolipid that is toxic for many microorganisms and confers biocontrol activity to U.maydis. Export of UA is presumably catalyzed by the ABC transporter atr1. Atr1 appears to be quite unspecific, as many of the UA derivatives produced by cluster mutant strains are readily exported. The polypeptide is ABC-type transporter atr1 (Mycosarcoma maydis (Corn smut fungus)).